A 485-amino-acid chain; its full sequence is E3 ubiquitin-protein ligase RNF8 (485 aa).

The 55-residue stretch at 38 to 92 (VTVGRGFGVTYQLVSKICPLMISRNHCVLKQNPEGQWTIMDNKSLNGVWLNRARL) folds into the FHA domain. The required for interaction with PIWIL1 stretch occupies residues 68–72 (QNPEG). At serine 157 the chain carries Phosphoserine. The tract at residues 181–220 (CESGQPVKSQGKGEVASTPSDNLDPKLTALEPSKTTGAPI) is disordered. The RING-type zinc-finger motif lies at 403 to 441 (CIICSEYFIEAVTLNCAHSFCSYCINEWMKRKIECPICR).

It belongs to the RNF8 family. Homodimer. Forms a E2-E3 ubiquitin ligase complex composed of the RNF8 homodimer and a E2 heterodimer of UBE2N and UBE2V2. Interacts with class III E2s, including UBE2E1, UBE2E2, and UBE2E3 and with UBE2N. Interacts with RXRA. Interacts (via FHA domain) with ATM-phosphorylated MDC1. Interacts (via FHA domain) with 'Thr-4827' phosphorylated HERC2 (via C-terminus). Interacts with PIWIL1; leading to sequester RNF8 in the cytoplasm. Interacts with WRAP53/TCAB1. As to quaternary structure, (Microbial infection) Interacts (via FHA domain) with phosphorylated human herpesvirus 1 ICP0 protein; leading to RNF8 degradation by the proteasome. In terms of processing, autoubiquitinated through 'Lys-48' and 'Lys-63' of ubiquitin. 'Lys-63' polyubiquitination is mediated by UBE2N. 'Lys-29'-type polyubiquitination is also observed, but it doesn't require its own functional RING-type zinc finger. Ubiquitous. In fetal tissues, highest expression in brain, thymus and liver. In adult tissues, highest levels in brain and testis, lowest levels in peripheral blood cells.

It localises to the nucleus. The protein resides in the cytoplasm. Its subcellular location is the midbody. It is found in the chromosome. The protein localises to the telomere. The enzyme catalyses S-ubiquitinyl-[E2 ubiquitin-conjugating enzyme]-L-cysteine + [acceptor protein]-L-lysine = [E2 ubiquitin-conjugating enzyme]-L-cysteine + N(6)-ubiquitinyl-[acceptor protein]-L-lysine.. It participates in protein modification; protein ubiquitination. E3 ubiquitin-protein ligase that plays a key role in DNA damage signaling via 2 distinct roles: by mediating the 'Lys-63'-linked ubiquitination of histones H2A and H2AX and promoting the recruitment of DNA repair proteins at double-strand breaks (DSBs) sites, and by catalyzing 'Lys-48'-linked ubiquitination to remove target proteins from DNA damage sites. Following DNA DSBs, it is recruited to the sites of damage by ATM-phosphorylated MDC1 and catalyzes the 'Lys-63'-linked ubiquitination of histones H2A and H2AX, thereby promoting the formation of TP53BP1 and BRCA1 ionizing radiation-induced foci (IRIF). Also controls the recruitment of UIMC1-BRCC3 (RAP80-BRCC36) and PAXIP1/PTIP to DNA damage sites. Promotes the recruitment of NBN to DNA damage sites by catalyzing 'Lys-6'-linked ubiquitination of NBN. Also recruited at DNA interstrand cross-links (ICLs) sites and catalyzes 'Lys-63'-linked ubiquitination of histones H2A and H2AX, leading to recruitment of FAAP20/C1orf86 and Fanconi anemia (FA) complex, followed by interstrand cross-link repair. H2A ubiquitination also mediates the ATM-dependent transcriptional silencing at regions flanking DSBs in cis, a mechanism to avoid collision between transcription and repair intermediates. Promotes the formation of 'Lys-63'-linked polyubiquitin chains via interactions with the specific ubiquitin-conjugating UBE2N/UBC13 and ubiquitinates non-histone substrates such as PCNA. Substrates that are polyubiquitinated at 'Lys-63' are usually not targeted for degradation. Also catalyzes the formation of 'Lys-48'-linked polyubiquitin chains via interaction with the ubiquitin-conjugating UBE2L6/UBCH8, leading to degradation of substrate proteins such as CHEK2, JMJD2A/KDM4A and KU80/XRCC5: it is still unclear how the preference toward 'Lys-48'- versus 'Lys-63'-linked ubiquitination is regulated but it could be due to RNF8 ability to interact with specific E2 specific ligases. For instance, interaction with phosphorylated HERC2 promotes the association between RNF8 and UBE2N/UBC13 and favors the specific formation of 'Lys-63'-linked ubiquitin chains. Promotes non-homologous end joining (NHEJ) by promoting the 'Lys-48'-linked ubiquitination and degradation the of KU80/XRCC5. Following DNA damage, mediates the ubiquitination and degradation of JMJD2A/KDM4A in collaboration with RNF168, leading to unmask H4K20me2 mark and promote the recruitment of TP53BP1 at DNA damage sites. Following DNA damage, mediates the ubiquitination and degradation of POLD4/p12, a subunit of DNA polymerase delta. In the absence of POLD4, DNA polymerase delta complex exhibits higher proofreading activity. In addition to its function in damage signaling, also plays a role in higher-order chromatin structure by mediating extensive chromatin decondensation. Involved in the activation of ATM by promoting histone H2B ubiquitination, which indirectly triggers histone H4 'Lys-16' acetylation (H4K16ac), establishing a chromatin environment that promotes efficient activation of ATM kinase. Required in the testis, where it plays a role in the replacement of histones during spermatogenesis. At uncapped telomeres, promotes the joining of deprotected chromosome ends by inducing H2A ubiquitination and TP53BP1 recruitment, suggesting that it may enhance cancer development by aggravating telomere-induced genome instability in case of telomeric crisis. Promotes the assembly of RAD51 at DNA DSBs in the absence of BRCA1 and TP53BP1 Also involved in class switch recombination in immune system, via its role in regulation of DSBs repair. May be required for proper exit from mitosis after spindle checkpoint activation and may regulate cytokinesis. May play a role in the regulation of RXRA-mediated transcriptional activity. Not involved in RXRA ubiquitination by UBE2E2. This chain is E3 ubiquitin-protein ligase RNF8, found in Homo sapiens (Human).